A 224-amino-acid chain; its full sequence is Charged multivesicular body protein 4b (224 aa).

The tract at residues 1–23 (MSVFGKLFGAGGGKAGKGGPTPQ) is disordered. Ser-2 is modified (N-acetylserine). Lys-6 is modified (N6-acetyllysine). Positions 8–19 (FGAGGGKAGKGG) are enriched in gly residues. The stretch at 23-183 (QEAIQRLRDT…EELDKNLLEI (161 aa)) forms a coiled coil. An N6-acetyllysine modification is found at Lys-114. A phosphoserine mark is found at Ser-184 and Ser-223. Residues 185–224 (GPETVPLPNVPSIALPSKPAKKKEEEDDDMKELENWAGSM) are disordered.

It belongs to the SNF7 family. Probable core component of the endosomal sorting required for transport complex III (ESCRT-III). ESCRT-III components are thought to multimerize to form a flat lattice on the perimeter membrane of the endosome. Several assembly forms of ESCRT-III may exist that interact and act sequentially. Interacts with CHMP6 and CHMP4C. Interacts with PDCD6IP; the interaction is direct. Interacts with VPS4A; the interaction is direct. Interacts with VPS4B; the interaction is direct. Interacts with CHMP7. Interacts with CFTR; the interaction requires misfolded CFTR. Interacts with PTPN23. Interacts with CC2D1B. In terms of processing, ISGylated. Isgylation weakens its interaction with VPS4A. Widely expressed. Expressed at higher level in heart and skeletal muscle. Also expressed in brain, colon, thymus, spleen, kidney, liver, small intestine, placenta, lung and peripheral blood lymphocytes.

It localises to the cytoplasm. It is found in the cytosol. Its subcellular location is the late endosome membrane. The protein localises to the midbody. The protein resides in the nucleus envelope. Functionally, probable core component of the endosomal sorting required for transport complex III (ESCRT-III) which is involved in multivesicular bodies (MVBs) formation and sorting of endosomal cargo proteins into MVBs. MVBs contain intraluminal vesicles (ILVs) that are generated by invagination and scission from the limiting membrane of the endosome and mostly are delivered to lysosomes enabling degradation of membrane proteins, such as stimulated growth factor receptors, lysosomal enzymes and lipids. The MVB pathway appears to require the sequential function of ESCRT-O, -I,-II and -III complexes. ESCRT-III proteins mostly dissociate from the invaginating membrane before the ILV is released. The ESCRT machinery also functions in topologically equivalent membrane fission events, such as the terminal stages of cytokinesis. Together with SPAST, the ESCRT-III complex promotes nuclear envelope sealing and mitotic spindle disassembly during late anaphase. Plays a role in the endosomal sorting pathway. ESCRT-III proteins are believed to mediate the necessary vesicle extrusion and/or membrane fission activities, possibly in conjunction with the AAA ATPase VPS4. When overexpressed, membrane-assembled circular arrays of CHMP4B filaments can promote or stabilize negative curvature and outward budding. CHMP4A/B/C are required for the exosomal release of SDCBP, CD63 and syndecan. Majority of the protein exists in a folded closed conformation. In terms of biological role, (Microbial infection) The ESCRT machinery also functions in topologically equivalent membrane fission events, such as the budding of enveloped viruses (HIV-1 and other lentiviruses). Via its interaction with PDCD6IP involved in HIV-1 p6- and p9-dependent virus release. The protein is Charged multivesicular body protein 4b (CHMP4B) of Homo sapiens (Human).